We begin with the raw amino-acid sequence, 238 residues long: 5-amino-6-(5-phospho-D-ribitylamino)uracil phosphatase YigB (238 aa).

Asp16 (nucleophile) is an active-site residue. Positions 16, 18, and 188 each coordinate Mg(2+). Asp16–Asp18 is a substrate binding site.

The protein belongs to the HAD-like hydrolase superfamily. Requires Mg(2+) as cofactor. Mn(2+) is required as a cofactor. It depends on Co(2+) as a cofactor. Zn(2+) serves as cofactor.

It catalyses the reaction 5-amino-6-(5-phospho-D-ribitylamino)uracil + H2O = 5-amino-6-(D-ribitylamino)uracil + phosphate. The protein operates within cofactor biosynthesis; riboflavin biosynthesis; 5-amino-6-(D-ribitylamino)uracil from GTP: step 4/4. In terms of biological role, catalyzes the dephosphorylation of 5-amino-6-(5-phospho-D-ribitylamino)uracil, and thus could be involved in the riboflavin biosynthesis pathway. Is also able to dephosphorylate flavin mononucleotide (FMN) and other phosphoric acid esters. YigB is important for the formation of dormant persister cells. This is 5-amino-6-(5-phospho-D-ribitylamino)uracil phosphatase YigB (yigB) from Escherichia coli (strain K12).